A 258-amino-acid chain; its full sequence is Ubiquinone/menaquinone biosynthesis C-methyltransferase UbiE (258 aa).

S-adenosyl-L-methionine is bound by residues threonine 81, aspartate 102, and 130–131 (NA).

Belongs to the class I-like SAM-binding methyltransferase superfamily. MenG/UbiE family.

The catalysed reaction is a 2-demethylmenaquinol + S-adenosyl-L-methionine = a menaquinol + S-adenosyl-L-homocysteine + H(+). The enzyme catalyses a 2-methoxy-6-(all-trans-polyprenyl)benzene-1,4-diol + S-adenosyl-L-methionine = a 5-methoxy-2-methyl-3-(all-trans-polyprenyl)benzene-1,4-diol + S-adenosyl-L-homocysteine + H(+). The protein operates within quinol/quinone metabolism; menaquinone biosynthesis; menaquinol from 1,4-dihydroxy-2-naphthoate: step 2/2. Its pathway is cofactor biosynthesis; ubiquinone biosynthesis. Its function is as follows. Methyltransferase required for the conversion of demethylmenaquinol (DMKH2) to menaquinol (MKH2) and the conversion of 2-polyprenyl-6-methoxy-1,4-benzoquinol (DDMQH2) to 2-polyprenyl-3-methyl-6-methoxy-1,4-benzoquinol (DMQH2). The sequence is that of Ubiquinone/menaquinone biosynthesis C-methyltransferase UbiE from Rhizobium meliloti (strain 1021) (Ensifer meliloti).